The primary structure comprises 80 residues: CDC42 small effector protein 1 (80 aa).

2 S-palmitoyl cysteine lipidation sites follow: C10 and C11. The CRIB domain occupies 30-43 (IGEPMNFVHLTHIG). The interval 48–80 (GAGDGLAMTGAVQEQMRSKGNHRDRPWSNSRAL) is disordered.

Belongs to the CDC42SE/SPEC family. Interacts with CDC42 (in GTP-bound form). Interacts weakly with RAC1 and not at all with RHOA.

The protein resides in the cytoplasm. Its subcellular location is the cytoskeleton. It is found in the cell membrane. Functionally, probably involved in the organization of the actin cytoskeleton by acting downstream of CDC42, inducing actin filament assembly. Alters CDC42-induced cell shape changes. In activated T-cells, may play a role in CDC42-mediated F-actin accumulation at the immunological synapse. May play a role in early contractile events in phagocytosis in macrophages. This Mus musculus (Mouse) protein is CDC42 small effector protein 1 (Cdc42se1).